A 67-amino-acid polypeptide reads, in one-letter code: uncharacterized protein (67 aa).

This is an uncharacterized protein from Caenorhabditis elegans.